The sequence spans 78 residues: U7-lycotoxin-Ls1e (78 aa).

The signal sequence occupies residues 1-22; it reads MKLIIFTGLALLLIVSLIDVEA. Positions 23–26 are excised as a propeptide; it reads QNEG.

It belongs to the neurotoxin 19 (CSTX) family. 07 (U7-Lctx) subfamily. Post-translationally, contains 4 disulfide bonds. As to expression, expressed by the venom gland.

The protein resides in the secreted. The sequence is that of U7-lycotoxin-Ls1e from Lycosa singoriensis (Wolf spider).